Here is a 254-residue protein sequence, read N- to C-terminus: Ubiquinone/menaquinone biosynthesis C-methyltransferase UbiE (254 aa).

S-adenosyl-L-methionine-binding positions include Thr77, Asp98, 126–127 (NA), and Ser143.

This sequence belongs to the class I-like SAM-binding methyltransferase superfamily. MenG/UbiE family.

It catalyses the reaction a 2-demethylmenaquinol + S-adenosyl-L-methionine = a menaquinol + S-adenosyl-L-homocysteine + H(+). The catalysed reaction is a 2-methoxy-6-(all-trans-polyprenyl)benzene-1,4-diol + S-adenosyl-L-methionine = a 5-methoxy-2-methyl-3-(all-trans-polyprenyl)benzene-1,4-diol + S-adenosyl-L-homocysteine + H(+). It functions in the pathway quinol/quinone metabolism; menaquinone biosynthesis; menaquinol from 1,4-dihydroxy-2-naphthoate: step 2/2. Its pathway is cofactor biosynthesis; ubiquinone biosynthesis. In terms of biological role, methyltransferase required for the conversion of demethylmenaquinol (DMKH2) to menaquinol (MKH2) and the conversion of 2-polyprenyl-6-methoxy-1,4-benzoquinol (DDMQH2) to 2-polyprenyl-3-methyl-6-methoxy-1,4-benzoquinol (DMQH2). This Hydrogenovibrio crunogenus (strain DSM 25203 / XCL-2) (Thiomicrospira crunogena) protein is Ubiquinone/menaquinone biosynthesis C-methyltransferase UbiE.